The primary structure comprises 269 residues: Probable cytochrome c oxidase subunit 2 (269 aa).

The next 3 membrane-spanning stretches (helical) occupy residues 8–28, 50–70, and 87–107; these read ITLIGLVLFSSFCFASEPLPW, LLYISTAIVLFVAGLLVFVCI, and ILIEIIWTVIPIIILVIIAVP. H189, C224, C228, and H232 together coordinate Cu cation.

The protein belongs to the cytochrome c oxidase subunit 2 family. Cu cation is required as a cofactor. The cofactor is heme.

It localises to the cell membrane. The catalysed reaction is 4 Fe(II)-[cytochrome c] + O2 + 8 H(+)(in) = 4 Fe(III)-[cytochrome c] + 2 H2O + 4 H(+)(out). In terms of biological role, subunits I and II form the functional core of the enzyme complex. Electrons originating in cytochrome c are transferred via heme a and Cu(A) to the binuclear center formed by heme a3 and Cu(B). This is Probable cytochrome c oxidase subunit 2 (ctaC) from Rickettsia bellii (strain RML369-C).